Here is a 140-residue protein sequence, read N- to C-terminus: CDGSH iron-sulfur domain-containing protein 2 homolog (140 aa).

Topologically, residues 1–35 are lumenal; the sequence is MEAIAKLIKVQLPNYLQKLPVPSSLSGFAELSPSD. A helical transmembrane segment spans residues 36 to 59; the sequence is AIAVVFPFAVVSWLIGYSTYKFFQ. The Cytoplasmic segment spans residues 60–140; the sequence is PKAVELPPSP…GPLIVKGKAN (81 aa). Cys-104, Cys-106, Cys-115, and His-119 together coordinate [2Fe-2S] cluster.

The protein belongs to the CISD protein family. CISD2 subfamily. Requires [2Fe-2S] cluster as cofactor.

The protein localises to the endoplasmic reticulum membrane. This is CDGSH iron-sulfur domain-containing protein 2 homolog from Trichoplax adhaerens (Trichoplax reptans).